A 134-amino-acid chain; its full sequence is Large ribosomal subunit protein mL41 (134 aa).

A mitochondrion-targeting transit peptide spans M1–R13.

Belongs to the mitochondrion-specific ribosomal protein mL41 family. In terms of assembly, component of the mitochondrial ribosome large subunit (39S) which comprises a 16S rRNA and about 50 distinct proteins. Interacts with BCL2. Was also identified in the 28S mitochondrial ribosome.

The protein resides in the mitochondrion. In terms of biological role, component of the mitochondrial ribosome large subunit. Also involved in apoptosis and cell cycle. Enhances p53/TP53 stability, thereby contributing to p53/TP53-induced apoptosis in response to growth-inhibitory condition. Enhances p53/TP53 translocation to the mitochondria. Has the ability to arrest the cell cycle at the G1 phase, possibly by stabilizing the CDKN1A and CDKN1B (p27Kip1) proteins. This Rattus norvegicus (Rat) protein is Large ribosomal subunit protein mL41 (Mrpl41).